The following is a 736-amino-acid chain: Ethylene receptor 2 (736 aa).

3 helical membrane passes run 22–42 (ISDF…VYFV), 53–73 (VLVQ…INLW), and 94–114 (AAVS…LLSV). Positions 64 and 68 each coordinate Cu cation. The 149-residue stretch at 157-305 (DRHTILKTTL…VVADQVAVAL (149 aa)) folds into the GAF domain. The 238-residue stretch at 348–585 (VMNHEMRTPM…TAIFIVKLGI (238 aa)) folds into the Histidine kinase domain. A Phosphohistidine; by autocatalysis modification is found at His-351. The Response regulatory domain maps to 613 to 730 (KVLVMDDNGF…KMRSVLSGLL (118 aa)). Asp-661 carries the 4-aspartylphosphate modification.

The protein belongs to the ethylene receptor family. In terms of assembly, homodimer; disulfide-linked. Cu cation is required as a cofactor. In terms of processing, activation probably requires a transfer of a phosphate group between a His in the transmitter domain and an Asp of the receiver domain. Leaves, flowers and fruits.

The protein resides in the endoplasmic reticulum membrane. The enzyme catalyses ATP + protein L-histidine = ADP + protein N-phospho-L-histidine.. Its function is as follows. May act early in the ethylene signal transduction pathway, possibly as an ethylene receptor, or as a regulator of the pathway. The chain is Ethylene receptor 2 (ETR2) from Solanum lycopersicum (Tomato).